The chain runs to 86 residues: Dynein light chain 1, cytoplasmic (86 aa).

The protein belongs to the dynein light chain family. Homodimer. Cytoplasmic dynein consists of two catalytic heavy chains (HCs) and a number of non-catalytic subunits which present intermediate chains (ICs), light intermediate chains (LICs) and light chains (LCs). Component of the nuclear pore complex (NPC). NPC constitutes the exclusive means of nucleocytoplasmic transport. NPCs allow the passive diffusion of ions and small molecules and the active, nuclear transport receptor-mediated bidirectional transport of macromolecules such as proteins, RNAs, ribonucleoparticles (RNPs), and ribosomal subunits across the nuclear envelope. Due to its 8-fold rotational symmetry, all subunits are present with 8 copies or multiples thereof.

It is found in the cytoplasm. It localises to the cytoskeleton. Its subcellular location is the nucleus. The protein localises to the nuclear pore complex. In terms of biological role, acts as one of several non-catalytic accessory components of the cytoplasmic dynein complex that are thought to be involved in linking dynein to cargos and to adapter proteins that regulate dynein function. Cytoplasmic dynein 1 acts as a motor for the intracellular retrograde motility of vesicles and organelles along microtubules. May play a role in changing or maintaining the spatial distribution of cytoskeletal structures. Also a component of the nuclear pore complex. In Candida glabrata (strain ATCC 2001 / BCRC 20586 / JCM 3761 / NBRC 0622 / NRRL Y-65 / CBS 138) (Yeast), this protein is Dynein light chain 1, cytoplasmic (DYN2).